Here is a 132-residue protein sequence, read N- to C-terminus: UPF0329 protein ECU07_0050/ECU09_2020 (132 aa).

The protein belongs to the UPF0329 family.

This is UPF0329 protein ECU07_0050/ECU09_2020 from Encephalitozoon cuniculi (strain GB-M1) (Microsporidian parasite).